Reading from the N-terminus, the 350-residue chain is MSLLPYALARPFLFGLDPETAHELTMASLARTQGTLLSAAYCSSKVSDPIELAGLKFSNRVGLAAGLDKNARCIDGLAAMGFGFVEVGTVTPKAQPGNPKPRMFRLPEANALINRLGFNNDGLDAFLANVRKSAVRQKNAKNALLLGLNIGKNAATPIENAVDDYLICLDGVYPHADYVTVNISSPNTKNLRALQSDEALDALLGRIAERRETLAGRHGKRVPIFVKIAPDLDDAQVAVIATTLKRHAMDGVVATNTTLSRDAVKGLRHAEEAGGLSGAPVLEASNRVIGQLRAALGKGFPIIGVGGVMSGLDAVSKIKAGADVVQIYTGLIYKGPALVAEAANSIKNSR.

FMN is bound by residues 65-69 and Thr89; that span reads AGLDK. Residue Lys69 participates in substrate binding. Position 114–118 (114–118) interacts with substrate; sequence NRLGF. 2 residues coordinate FMN: Asn149 and Asn182. Substrate is bound at residue Asn182. The active-site Nucleophile is the Ser185. Position 187 (Asn187) interacts with substrate. The FMN site is built by Lys227 and Thr255. 256-257 is a substrate binding site; sequence NT. FMN is bound by residues Gly278, Gly307, and 328-329; that span reads YT.

Belongs to the dihydroorotate dehydrogenase family. Type 2 subfamily. As to quaternary structure, monomer. The cofactor is FMN.

The protein localises to the cell membrane. It catalyses the reaction (S)-dihydroorotate + a quinone = orotate + a quinol. It functions in the pathway pyrimidine metabolism; UMP biosynthesis via de novo pathway; orotate from (S)-dihydroorotate (quinone route): step 1/1. Functionally, catalyzes the conversion of dihydroorotate to orotate with quinone as electron acceptor. This is Dihydroorotate dehydrogenase (quinone) from Polaromonas naphthalenivorans (strain CJ2).